A 272-amino-acid polypeptide reads, in one-letter code: Probable ribosomal RNA small subunit methyltransferase A (272 aa).

6 residues coordinate S-adenosyl-L-methionine: N23, L25, G50, E71, D95, and N110.

The protein belongs to the class I-like SAM-binding methyltransferase superfamily. rRNA adenine N(6)-methyltransferase family. RsmA subfamily.

Its subcellular location is the cytoplasm. Functionally, specifically dimethylates two adjacent adenosines in the loop of a conserved hairpin near the 3'-end of 16S rRNA in the 30S particle. May play a critical role in biogenesis of 30S subunits. This Thermococcus onnurineus (strain NA1) protein is Probable ribosomal RNA small subunit methyltransferase A.